Consider the following 232-residue polypeptide: Thiamine import ATP-binding protein ThiQ (232 aa).

An ABC transporter domain is found at 2–230 (LKLTDITWLY…KASASALLGI (229 aa)). 32–39 (GPSGAGKS) serves as a coordination point for ATP.

This sequence belongs to the ABC transporter superfamily. Thiamine importer (TC 3.A.1.19.1) family. In terms of assembly, the complex is composed of two ATP-binding proteins (ThiQ), two transmembrane proteins (ThiP) and a solute-binding protein (ThiB).

Its subcellular location is the cell inner membrane. It catalyses the reaction thiamine(out) + ATP + H2O = thiamine(in) + ADP + phosphate + H(+). Part of the ABC transporter complex ThiBPQ involved in thiamine import. Responsible for energy coupling to the transport system. This is Thiamine import ATP-binding protein ThiQ from Escherichia coli O157:H7.